Reading from the N-terminus, the 250-residue chain is Probable transcriptional regulatory protein SYNAS_07390 (250 aa).

Belongs to the TACO1 family.

Its subcellular location is the cytoplasm. This Syntrophus aciditrophicus (strain SB) protein is Probable transcriptional regulatory protein SYNAS_07390.